We begin with the raw amino-acid sequence, 324 residues long: Adenine deaminase (324 aa).

Zn(2+) contacts are provided by histidine 11, histidine 13, and histidine 189. Glutamate 192 functions as the Proton donor in the catalytic mechanism. Aspartate 270 is a Zn(2+) binding site. Aspartate 271 is a substrate binding site.

It belongs to the metallo-dependent hydrolases superfamily. Adenosine and AMP deaminases family. Adenine deaminase type 2 subfamily. Zn(2+) is required as a cofactor.

It carries out the reaction adenine + H2O + H(+) = hypoxanthine + NH4(+). In terms of biological role, catalyzes the hydrolytic deamination of adenine to hypoxanthine. Plays an important role in the purine salvage pathway and in nitrogen catabolism. The polypeptide is Adenine deaminase (Sinorhizobium medicae (strain WSM419) (Ensifer medicae)).